The chain runs to 261 residues: Glutamate racemase (261 aa).

Residues 9–10 and 41–42 contribute to the substrate site; these read DS and YG. Cys73 (proton donor/acceptor) is an active-site residue. A substrate-binding site is contributed by 74–75; the sequence is NT. Cys179 acts as the Proton donor/acceptor in catalysis. 180 to 181 is a binding site for substrate; the sequence is TH.

It belongs to the aspartate/glutamate racemases family.

It carries out the reaction L-glutamate = D-glutamate. The protein operates within cell wall biogenesis; peptidoglycan biosynthesis. In terms of biological role, provides the (R)-glutamate required for cell wall biosynthesis. This Aliivibrio fischeri (strain MJ11) (Vibrio fischeri) protein is Glutamate racemase.